A 299-amino-acid polypeptide reads, in one-letter code: Bifunctional protein FolD (299 aa).

Residues 168–170 (GRS), serine 193, and isoleucine 234 each bind NADP(+).

Belongs to the tetrahydrofolate dehydrogenase/cyclohydrolase family. Homodimer.

The enzyme catalyses (6R)-5,10-methylene-5,6,7,8-tetrahydrofolate + NADP(+) = (6R)-5,10-methenyltetrahydrofolate + NADPH. The catalysed reaction is (6R)-5,10-methenyltetrahydrofolate + H2O = (6R)-10-formyltetrahydrofolate + H(+). Its pathway is one-carbon metabolism; tetrahydrofolate interconversion. In terms of biological role, catalyzes the oxidation of 5,10-methylenetetrahydrofolate to 5,10-methenyltetrahydrofolate and then the hydrolysis of 5,10-methenyltetrahydrofolate to 10-formyltetrahydrofolate. The polypeptide is Bifunctional protein FolD (Agrobacterium fabrum (strain C58 / ATCC 33970) (Agrobacterium tumefaciens (strain C58))).